The sequence spans 172 residues: Large ribosomal subunit protein uL10 (172 aa).

It belongs to the universal ribosomal protein uL10 family. As to quaternary structure, part of the ribosomal stalk of the 50S ribosomal subunit. The N-terminus interacts with L11 and the large rRNA to form the base of the stalk. The C-terminus forms an elongated spine to which L12 dimers bind in a sequential fashion forming a multimeric L10(L12)X complex.

In terms of biological role, forms part of the ribosomal stalk, playing a central role in the interaction of the ribosome with GTP-bound translation factors. The sequence is that of Large ribosomal subunit protein uL10 from Rhodopseudomonas palustris (strain TIE-1).